Here is a 1935-residue protein sequence, read N- to C-terminus: Myosin-7 (1935 aa).

Residues 32–81 (DLKKDVFVPDDKEEFVKATILSREGGKVTAETEHGKTVTVKEDQVLQQNP) form the Myosin N-terminal SH3-like domain. Positions 85 to 778 (DKIEDMAMLT…LLGLLEEMRD (694 aa)) constitute a Myosin motor domain. Lys129 is subject to N6,N6,N6-trimethyllysine. Residue 178–185 (GESGAGKT) participates in ATP binding. Thr378 bears the Phosphothreonine mark. Actin-binding stretches follow at residues 655–677 (LNKL…IPNE) and 757–771 (KFGH…GLLG). The IQ domain occupies 781–810 (LSRIITRIQAQSRGVLSRMEFKKLLERRDS). A coiled-coil region spans residues 839 to 1935 (LLKSAETEKE…DIGTKGLNEE (1097 aa)). 2 positions are modified to phosphoserine: Ser1137 and Ser1269. Position 1282 is a phosphothreonine (Thr1282). Position 1308 is a phosphotyrosine (Tyr1308). Thr1309 carries the phosphothreonine modification. Ser1510 is modified (phosphoserine). Thr1513 carries the phosphothreonine modification. The tract at residues 1907–1935 (EERADIAESQVNKLRAKSRDIGTKGLNEE) is disordered. The segment covering 1923 to 1935 (KSRDIGTKGLNEE) has biased composition (basic and acidic residues).

This sequence belongs to the TRAFAC class myosin-kinesin ATPase superfamily. Myosin family. In terms of assembly, muscle myosin is a hexameric protein that consists of 2 heavy chain subunits (MHC), 2 alkali light chain subunits (MLC) and 2 regulatory light chain subunits (MLC-2). Interacts with ECPAS. Interacts (via C-terminus) with LRRC39.

It localises to the cytoplasm. The protein localises to the myofibril. The protein resides in the sarcomere. In terms of biological role, myosins are actin-based motor molecules with ATPase activity essential for muscle contraction. Forms regular bipolar thick filaments that, together with actin thin filaments, constitute the fundamental contractile unit of skeletal and cardiac muscle. In Bos taurus (Bovine), this protein is Myosin-7 (MYH7).